The chain runs to 204 residues: bMERB domain-containing protein 1 (204 aa).

The region spanning 3–150 (LKQSLSTHLE…EQEEDKEMAD (148 aa)) is the bMERB domain. The tract at residues 162–187 (VTKSPASSRAEKKAEPPPSKPTVAKT) is disordered.

The sequence is that of bMERB domain-containing protein 1 from Homo sapiens (Human).